Here is a 251-residue protein sequence, read N- to C-terminus: Coproheme decarboxylase (251 aa).

Fe-coproporphyrin III is bound by residues Arg133, 147–151 (YPMSK), His174, Gln187, and Ser225. Residue Tyr147 is part of the active site.

Belongs to the ChdC family. Type 1 subfamily. Requires Fe-coproporphyrin III as cofactor.

The catalysed reaction is Fe-coproporphyrin III + 2 H2O2 + 2 H(+) = heme b + 2 CO2 + 4 H2O. The enzyme catalyses Fe-coproporphyrin III + H2O2 + H(+) = harderoheme III + CO2 + 2 H2O. It carries out the reaction harderoheme III + H2O2 + H(+) = heme b + CO2 + 2 H2O. Its pathway is porphyrin-containing compound metabolism; protoheme biosynthesis. Functionally, involved in coproporphyrin-dependent heme b biosynthesis. Catalyzes the decarboxylation of Fe-coproporphyrin III (coproheme) to heme b (protoheme IX), the last step of the pathway. The reaction occurs in a stepwise manner with a three-propionate intermediate. This Listeria welshimeri serovar 6b (strain ATCC 35897 / DSM 20650 / CCUG 15529 / CIP 8149 / NCTC 11857 / SLCC 5334 / V8) protein is Coproheme decarboxylase.